The primary structure comprises 513 residues: Putative ribose/galactose/methyl galactoside import ATP-binding protein 2 (513 aa).

2 ABC transporter domains span residues 24–260 (LTAE…VGRE) and 270–510 (VPIG…VMEL). 56–63 (GENGAGKS) lines the ATP pocket.

It belongs to the ABC transporter superfamily. Carbohydrate importer 2 (CUT2) (TC 3.A.1.2) family.

It is found in the cell inner membrane. The enzyme catalyses D-ribose(out) + ATP + H2O = D-ribose(in) + ADP + phosphate + H(+). The catalysed reaction is D-galactose(out) + ATP + H2O = D-galactose(in) + ADP + phosphate + H(+). In terms of biological role, part of an ABC transporter complex involved in carbohydrate import. Could be involved in ribose, galactose and/or methyl galactoside import. Responsible for energy coupling to the transport system. The sequence is that of Putative ribose/galactose/methyl galactoside import ATP-binding protein 2 from Rhizobium meliloti (strain 1021) (Ensifer meliloti).